Reading from the N-terminus, the 129-residue chain is Large ribosomal subunit protein mL53 (129 aa).

Residues M1–S50 constitute a mitochondrion transit peptide.

The protein belongs to the mitochondrion-specific ribosomal protein mL53 family.

The protein resides in the mitochondrion. The chain is Large ribosomal subunit protein mL53 (mrpl53) from Dictyostelium discoideum (Social amoeba).